The primary structure comprises 91 residues: UPF0213 protein NGO_1598 (91 aa).

Positions 4-83 constitute a GIY-YIG domain; it reads SNWSVYLILC…AAQKRQLWEQ (80 aa).

The protein belongs to the UPF0213 family.

This chain is UPF0213 protein NGO_1598, found in Neisseria gonorrhoeae (strain ATCC 700825 / FA 1090).